The primary structure comprises 210 residues: Coatomer subunit zeta-2 (210 aa).

Over residues 1–12 (MQRPEAWPRPHP) the composition is skewed to basic and acidic residues. The segment at 1–34 (MQRPEAWPRPHPGEGAAAAQAGGPAPPARAGEPS) is disordered. A compositionally biased stretch (low complexity) spans 13-34 (GEGAAAAQAGGPAPPARAGEPS).

Belongs to the adaptor complexes small subunit family. In terms of assembly, oligomeric complex.

The protein localises to the cytoplasm. The protein resides in the endoplasmic reticulum-Golgi intermediate compartment membrane. It localises to the golgi apparatus membrane. Its subcellular location is the cytoplasmic vesicle. It is found in the COPI-coated vesicle membrane. Functionally, the coatomer is a cytosolic protein complex that binds to dilysine motifs and reversibly associates with Golgi non-clathrin-coated vesicles, which further mediate biosynthetic protein transport from the ER, via the Golgi up to the trans Golgi network. Coatomer complex is required for budding from Golgi membranes, and is essential for the retrograde Golgi-to-ER transport of dilysine-tagged proteins. The zeta subunit may be involved in regulating the coat assembly and, hence, the rate of biosynthetic protein transport due to its association-dissociation properties with the coatomer complex. This is Coatomer subunit zeta-2 (COPZ2) from Homo sapiens (Human).